The primary structure comprises 544 residues: Lipid II flippase MurJ (544 aa).

The next 14 helical transmembrane spans lie at 21 to 41 (ILGM…GGAL), 49 to 69 (YTLF…KFVS), 90 to 110 (VMLV…PMFA), 127 to 147 (VVYV…MSLV), 169 to 189 (IVRI…FNGG), 191 to 211 (VIAV…GLVV), 241 to 261 (MFFE…AIPL), 297 to 317 (LVMI…PTIT), 338 to 358 (TILF…GPTY), 375 to 395 (ILLW…NAAI), 404 to 424 (FAVV…VPLI), 431 to 451 (GAIL…FIMI), 471 to 491 (VLSA…GFFI), and 500 to 520 (AAIV…YCGY).

It belongs to the polysaccharide synthase family.

Its subcellular location is the cell membrane. It participates in cell wall biogenesis; peptidoglycan biosynthesis. Functionally, involved in peptidoglycan biosynthesis. Transports lipid-linked peptidoglycan precursors from the inner to the outer leaflet of the cytoplasmic membrane. Not essential for growth. The chain is Lipid II flippase MurJ from Bacillus subtilis (strain 168).